Here is a 438-residue protein sequence, read N- to C-terminus: 3-phosphoshikimate 1-carboxyvinyltransferase 1 (438 aa).

3-phosphoshikimate-binding residues include Lys-30, Ser-31, and Arg-35. Phosphoenolpyruvate is bound at residue Lys-30. Residues Gly-104 and Arg-132 each coordinate phosphoenolpyruvate. 3-phosphoshikimate contacts are provided by Ser-178, Ser-179, Gln-180, Ser-207, Glu-326, and His-353. Gln-180 is a binding site for phosphoenolpyruvate. The active-site Proton acceptor is the Glu-326. Residues Arg-357, Arg-398, and Lys-423 each coordinate phosphoenolpyruvate.

The protein belongs to the EPSP synthase family. In terms of assembly, monomer.

The protein localises to the cytoplasm. The enzyme catalyses 3-phosphoshikimate + phosphoenolpyruvate = 5-O-(1-carboxyvinyl)-3-phosphoshikimate + phosphate. It functions in the pathway metabolic intermediate biosynthesis; chorismate biosynthesis; chorismate from D-erythrose 4-phosphate and phosphoenolpyruvate: step 6/7. Functionally, catalyzes the transfer of the enolpyruvyl moiety of phosphoenolpyruvate (PEP) to the 5-hydroxyl of shikimate-3-phosphate (S3P) to produce enolpyruvyl shikimate-3-phosphate and inorganic phosphate. This chain is 3-phosphoshikimate 1-carboxyvinyltransferase 1, found in Streptomyces coelicolor (strain ATCC BAA-471 / A3(2) / M145).